The primary structure comprises 85 residues: Large ribosomal subunit protein bL27 (85 aa).

Residues 1 to 22 (MAHKKGQGSSRNGRDSPGQRRG) form a disordered region.

The protein belongs to the bacterial ribosomal protein bL27 family.

This chain is Large ribosomal subunit protein bL27, found in Anaeromyxobacter dehalogenans (strain 2CP-1 / ATCC BAA-258).